Here is a 368-residue protein sequence, read N- to C-terminus: N-succinylamino acid racemase (368 aa).

2-succinylbenzoate contacts are provided by residues serine 135 and lysine 161–lysine 163. Lysine 163 functions as the Proton donor in the catalytic mechanism. Residue aspartate 189 participates in Mg(2+) binding. Asparagine 191 lines the 2-succinylbenzoate pocket. Mg(2+) contacts are provided by glutamate 214 and aspartate 239. Lysine 263 acts as the Proton acceptor in catalysis. Isoleucine 293 is a binding site for 2-succinylbenzoate.

The protein belongs to the mandelate racemase/muconate lactonizing enzyme family. MenC type 2 subfamily. As to quaternary structure, homooctamer. Requires a divalent metal cation as cofactor.

It carries out the reaction N-acetyl-D-methionine = N-acetyl-L-methionine. It catalyses the reaction (1R,6R)-6-hydroxy-2-succinyl-cyclohexa-2,4-diene-1-carboxylate = 2-succinylbenzoate + H2O. With respect to regulation, inhibited by EDTA and sulfhydryl reagents such as p-chloromercuribenzoic acid. Both OSBS and NAAAR activities are inhibited competitively by salicylhydroxamate. In terms of biological role, acts as a N-succinylamino acid racemase (NSAR) that catalyzes the racemization of N-succinyl-phenylglycine and N-succinyl-methionine. Can catalyze the racemization of a broad range of N-acylamino acids, including N-acetyl-D/L-methionine, N-propionyl-D/L-methionine, N-butyryl-D/L-methionine and N-chloroacetyl-L-valine. Also converts 2-succinyl-6-hydroxy-2,4-cyclohexadiene-1-carboxylate (SHCHC) to 2-succinylbenzoate (OSB). Catalyzes both N-succinylamino acid racemization and OSB synthesis at equivalent rates. NSAR is probably the biological function of this enzyme. In Amycolatopsis sp, this protein is N-succinylamino acid racemase.